Here is a 124-residue protein sequence, read N- to C-terminus: Holo-[acyl-carrier-protein] synthase (124 aa).

The Mg(2+) site is built by aspartate 7 and glutamate 55.

It belongs to the P-Pant transferase superfamily. AcpS family. The cofactor is Mg(2+).

Its subcellular location is the cytoplasm. The enzyme catalyses apo-[ACP] + CoA = holo-[ACP] + adenosine 3',5'-bisphosphate + H(+). Transfers the 4'-phosphopantetheine moiety from coenzyme A to a Ser of acyl-carrier-protein. The polypeptide is Holo-[acyl-carrier-protein] synthase (Borreliella burgdorferi (strain ATCC 35210 / DSM 4680 / CIP 102532 / B31) (Borrelia burgdorferi)).